The chain runs to 397 residues: MTTLLNPYFGEFGGMYVPQILMPALRQLEEAFVSAQKDPEFQAQFNDLLKNYAGRPTALTKCQNITAGTNTTLYLKREDLLHGGAHKTNQVLGQALLAKRMGKTEIIAETGAGQHGVASALASALLGLKCRIYMGAKDVERQSPNVFRMRLMGAEVIPVHSGSATLKDACNEALRDWSGSYETAHYMLGTAAGPHPYPTIVREFQRMIGEETKAQILEREGRLPDAVIACVGGGSNAIGMFADFINETNVGLIGVEPGGHGIETGEHGAPLKHGRVGIYFGMKAPMMQTEDGQIEESYSISAGLDFPSVGPQHAYLNSTGRADYVSITDDEALEAFKTLCLHEGIIPALESSHALAHALKMMRENPEKEQLLVVNLSGRGDKDIFTVHDILKARGEI.

The residue at position 87 (Lys-87) is an N6-(pyridoxal phosphate)lysine.

This sequence belongs to the TrpB family. Tetramer of two alpha and two beta chains. It depends on pyridoxal 5'-phosphate as a cofactor.

It carries out the reaction (1S,2R)-1-C-(indol-3-yl)glycerol 3-phosphate + L-serine = D-glyceraldehyde 3-phosphate + L-tryptophan + H2O. It functions in the pathway amino-acid biosynthesis; L-tryptophan biosynthesis; L-tryptophan from chorismate: step 5/5. Its function is as follows. The beta subunit is responsible for the synthesis of L-tryptophan from indole and L-serine. The protein is Tryptophan synthase beta chain of Escherichia coli O157:H7.